The chain runs to 215 residues: uncharacterized protein (215 aa).

The S-adenosyl-L-methionine site is built by Gly53, Glu74, and Asp97.

Belongs to the methyltransferase superfamily. YrrT family.

In terms of biological role, could be a S-adenosyl-L-methionine-dependent methyltransferase. This is an uncharacterized protein from Geobacillus thermodenitrificans (strain NG80-2).